Here is a 629-residue protein sequence, read N- to C-terminus: 1-deoxy-D-xylulose-5-phosphate synthase (629 aa).

Residues His72 and 113–115 (GHS) contribute to the thiamine diphosphate site. Asp144 provides a ligand contact to Mg(2+). Thiamine diphosphate is bound by residues 145 to 146 (GA), Asn173, Tyr284, and Glu366. Asn173 contributes to the Mg(2+) binding site.

The protein belongs to the transketolase family. DXPS subfamily. As to quaternary structure, homodimer. It depends on Mg(2+) as a cofactor. The cofactor is thiamine diphosphate.

The enzyme catalyses D-glyceraldehyde 3-phosphate + pyruvate + H(+) = 1-deoxy-D-xylulose 5-phosphate + CO2. It functions in the pathway metabolic intermediate biosynthesis; 1-deoxy-D-xylulose 5-phosphate biosynthesis; 1-deoxy-D-xylulose 5-phosphate from D-glyceraldehyde 3-phosphate and pyruvate: step 1/1. In terms of biological role, catalyzes the acyloin condensation reaction between C atoms 2 and 3 of pyruvate and glyceraldehyde 3-phosphate to yield 1-deoxy-D-xylulose-5-phosphate (DXP). The polypeptide is 1-deoxy-D-xylulose-5-phosphate synthase (Halalkalibacterium halodurans (strain ATCC BAA-125 / DSM 18197 / FERM 7344 / JCM 9153 / C-125) (Bacillus halodurans)).